We begin with the raw amino-acid sequence, 325 residues long: Protein translocase subunit SecF (325 aa).

Helical transmembrane passes span 36 to 56 (GYIL…TKGF), 148 to 168 (LAQG…IYVG), 175 to 197 (LGFG…FSAL), 202 to 224 (DLTF…IVVF), 254 to 274 (TIIT…FGGP), and 281 to 301 (LALL…AIAI).

Belongs to the SecD/SecF family. SecF subfamily. As to quaternary structure, forms a complex with SecD. Part of the essential Sec protein translocation apparatus which comprises SecA, SecYEG and auxiliary proteins SecDF-YajC and YidC.

It is found in the cell inner membrane. In terms of biological role, part of the Sec protein translocase complex. Interacts with the SecYEG preprotein conducting channel. SecDF uses the proton motive force (PMF) to complete protein translocation after the ATP-dependent function of SecA. This Haemophilus influenzae (strain ATCC 51907 / DSM 11121 / KW20 / Rd) protein is Protein translocase subunit SecF.